The sequence spans 33 residues: Phosphoglycerate kinase (33 aa).

Position 13 (K13) interacts with AMP. K13 contacts ATP.

This sequence belongs to the phosphoglycerate kinase family. Monomer. It depends on Mg(2+) as a cofactor.

The catalysed reaction is (2R)-3-phosphoglycerate + ATP = (2R)-3-phospho-glyceroyl phosphate + ADP. This is Phosphoglycerate kinase from Pseudotsuga menziesii (Douglas-fir).